Reading from the N-terminus, the 205-residue chain is Transcriptional regulator GfcR (205 aa).

Belongs to the purine/pyrimidine phosphoribosyltransferase family. GfcR subfamily.

The polypeptide is Transcriptional regulator GfcR (Methanococcus maripaludis (strain C7 / ATCC BAA-1331)).